The sequence spans 247 residues: Caffeoyl-CoA O-methyltransferase 2 (247 aa).

A substrate-binding site is contributed by Lys-21. S-adenosyl-L-methionine contacts are provided by residues Thr-63, Glu-85, 87–88 (GV), Ser-93, Asp-111, and Ala-140. A substrate-binding site is contributed by Asp-163. Asp-163 contributes to the a divalent metal cation binding site. Asp-165 lines the S-adenosyl-L-methionine pocket. Asp-189 and Asn-190 together coordinate a divalent metal cation. Position 194 (Asn-194) interacts with substrate.

This sequence belongs to the class I-like SAM-binding methyltransferase superfamily. Cation-dependent O-methyltransferase family. CCoAMT subfamily. Requires a divalent metal cation as cofactor.

The catalysed reaction is (E)-caffeoyl-CoA + S-adenosyl-L-methionine = (E)-feruloyl-CoA + S-adenosyl-L-homocysteine + H(+). The protein operates within aromatic compound metabolism; phenylpropanoid biosynthesis. Methylates caffeoyl-CoA to feruloyl-CoA and 5-hydroxyferuloyl-CoA to sinapoyl-CoA. Plays a role in the synthesis of feruloylated polysaccharides. Involved in the reinforcement of the plant cell wall. Also involved in the responding to wounding or pathogen challenge by the increased formation of cell wall-bound ferulic acid polymers. The chain is Caffeoyl-CoA O-methyltransferase 2 (CCOAOMT2) from Populus trichocarpa (Western balsam poplar).